A 144-amino-acid polypeptide reads, in one-letter code: Granulocyte-macrophage colony-stimulating factor (144 aa).

The first 17 residues, 1 to 17, serve as a signal peptide directing secretion; it reads MWLQNLLLLGTVVCSFS. Ser24 carries an O-linked (GalNAc...) serine glycan. The O-linked (GalNAc...) threonine glycan is linked to Thr27. N-linked (GlcNAc...) asparagine glycosylation is found at Asn44 and Asn54. 2 disulfide bridges follow: Cys71–Cys113 and Cys105–Cys138.

It belongs to the GM-CSF family. Monomer. The signaling GM-CSF receptor complex is a dodecamer of two head-to-head hexamers of two alpha, two beta, and two ligand subunits.

The protein localises to the secreted. In terms of biological role, cytokine that stimulates the growth and differentiation of hematopoietic precursor cells from various lineages, including granulocytes, macrophages, eosinophils and erythrocytes. The protein is Granulocyte-macrophage colony-stimulating factor (CSF2) of Cervus elaphus (Red deer).